The following is a 447-amino-acid chain: UDP-N-acetylmuramate--L-alanine ligase (447 aa).

Residue 108-114 participates in ATP binding; the sequence is GSHGKTS.

The protein belongs to the MurCDEF family.

The protein resides in the cytoplasm. The enzyme catalyses UDP-N-acetyl-alpha-D-muramate + L-alanine + ATP = UDP-N-acetyl-alpha-D-muramoyl-L-alanine + ADP + phosphate + H(+). Its pathway is cell wall biogenesis; peptidoglycan biosynthesis. Cell wall formation. The sequence is that of UDP-N-acetylmuramate--L-alanine ligase from Listeria monocytogenes serotype 4b (strain F2365).